A 532-amino-acid polypeptide reads, in one-letter code: NADH-quinone oxidoreductase subunit N 2 (532 aa).

Transmembrane regions (helical) follow at residues 37-57 (VAPP…DLFL), 63-83 (RLLG…LIPL), 107-127 (FTLV…LLSL), 133-153 (LPAG…ALLP), 158-178 (LATL…LVGI), 192-212 (FFLS…FVYA), 241-261 (VALT…HFWV), 276-296 (LSVV…VVAF), 302-322 (VWGP…NVAA), 336-356 (LLAW…AAAA), 367-387 (VAYA…AAVV), 411-431 (LALG…IGLF), 444-464 (GLGW…YYYL), and 504-524 (TAIV…QTVL).

This sequence belongs to the complex I subunit 2 family. In terms of assembly, NDH-1 is composed of 14 different subunits. Subunits NuoA, H, J, K, L, M, N constitute the membrane sector of the complex.

The protein localises to the cell membrane. The catalysed reaction is a quinone + NADH + 5 H(+)(in) = a quinol + NAD(+) + 4 H(+)(out). NDH-1 shuttles electrons from NADH, via FMN and iron-sulfur (Fe-S) centers, to quinones in the respiratory chain. The immediate electron acceptor for the enzyme in this species is believed to be a menaquinone. Couples the redox reaction to proton translocation (for every two electrons transferred, four hydrogen ions are translocated across the cytoplasmic membrane), and thus conserves the redox energy in a proton gradient. This chain is NADH-quinone oxidoreductase subunit N 2, found in Streptomyces griseus subsp. griseus (strain JCM 4626 / CBS 651.72 / NBRC 13350 / KCC S-0626 / ISP 5235).